Here is a 258-residue protein sequence, read N- to C-terminus: Ribosomal RNA small subunit methyltransferase A (258 aa).

The S-adenosyl-L-methionine site is built by His-13, Leu-15, Gly-40, Glu-62, Asp-87, and Asn-108.

Belongs to the class I-like SAM-binding methyltransferase superfamily. rRNA adenine N(6)-methyltransferase family. RsmA subfamily.

It is found in the cytoplasm. The catalysed reaction is adenosine(1518)/adenosine(1519) in 16S rRNA + 4 S-adenosyl-L-methionine = N(6)-dimethyladenosine(1518)/N(6)-dimethyladenosine(1519) in 16S rRNA + 4 S-adenosyl-L-homocysteine + 4 H(+). In terms of biological role, specifically dimethylates two adjacent adenosines (A1518 and A1519) in the loop of a conserved hairpin near the 3'-end of 16S rRNA in the 30S particle. May play a critical role in biogenesis of 30S subunits. The polypeptide is Ribosomal RNA small subunit methyltransferase A (Sulfurihydrogenibium sp. (strain YO3AOP1)).